The primary structure comprises 316 residues: Phospho-N-acetylmuramoyl-pentapeptide-transferase (316 aa).

The next 10 helical transmembrane spans lie at 5 to 25, 52 to 72, 76 to 96, 116 to 136, 145 to 165, 172 to 192, 195 to 212, 221 to 241, 244 to 264, and 296 to 316; these read IIFA…FFIP, TMGG…FSPW, LFIL…DDFL, FLLA…EIIV, LANF…NSVN, GLAA…ALFL, VTYG…LGFL, VFMG…VALL, LPLI…SVIL, and VVYS…YSLS.

It belongs to the glycosyltransferase 4 family. MraY subfamily. Requires Mg(2+) as cofactor.

It is found in the cell membrane. It carries out the reaction UDP-N-acetyl-alpha-D-muramoyl-L-alanyl-gamma-D-glutamyl-meso-2,6-diaminopimeloyl-D-alanyl-D-alanine + di-trans,octa-cis-undecaprenyl phosphate = di-trans,octa-cis-undecaprenyl diphospho-N-acetyl-alpha-D-muramoyl-L-alanyl-D-glutamyl-meso-2,6-diaminopimeloyl-D-alanyl-D-alanine + UMP. The protein operates within cell wall biogenesis; peptidoglycan biosynthesis. Its function is as follows. Catalyzes the initial step of the lipid cycle reactions in the biosynthesis of the cell wall peptidoglycan: transfers peptidoglycan precursor phospho-MurNAc-pentapeptide from UDP-MurNAc-pentapeptide onto the lipid carrier undecaprenyl phosphate, yielding undecaprenyl-pyrophosphoryl-MurNAc-pentapeptide, known as lipid I. The polypeptide is Phospho-N-acetylmuramoyl-pentapeptide-transferase (Caldanaerobacter subterraneus subsp. tengcongensis (strain DSM 15242 / JCM 11007 / NBRC 100824 / MB4) (Thermoanaerobacter tengcongensis)).